Consider the following 80-residue polypeptide: ATP synthase subunit c (80 aa).

The next 2 helical transmembrane spans lie at 11–31 (IAAAMMMGLAAIGASIGIGIL) and 53–73 (FFIVMGLVDAIPMIAVGLGLY).

Belongs to the ATPase C chain family. As to quaternary structure, F-type ATPases have 2 components, F(1) - the catalytic core - and F(0) - the membrane proton channel. F(1) has five subunits: alpha(3), beta(3), gamma(1), delta(1), epsilon(1). F(0) has three main subunits: a(1), b(2) and c(10-14). The alpha and beta chains form an alternating ring which encloses part of the gamma chain. F(1) is attached to F(0) by a central stalk formed by the gamma and epsilon chains, while a peripheral stalk is formed by the delta and b chains.

It localises to the cell inner membrane. Functionally, f(1)F(0) ATP synthase produces ATP from ADP in the presence of a proton or sodium gradient. F-type ATPases consist of two structural domains, F(1) containing the extramembraneous catalytic core and F(0) containing the membrane proton channel, linked together by a central stalk and a peripheral stalk. During catalysis, ATP synthesis in the catalytic domain of F(1) is coupled via a rotary mechanism of the central stalk subunits to proton translocation. Its function is as follows. Key component of the F(0) channel; it plays a direct role in translocation across the membrane. A homomeric c-ring of between 10-14 subunits forms the central stalk rotor element with the F(1) delta and epsilon subunits. The polypeptide is ATP synthase subunit c (Aeromonas hydrophila subsp. hydrophila (strain ATCC 7966 / DSM 30187 / BCRC 13018 / CCUG 14551 / JCM 1027 / KCTC 2358 / NCIMB 9240 / NCTC 8049)).